A 216-amino-acid chain; its full sequence is Imidazole glycerol phosphate synthase subunit HisH 1 (216 aa).

Residues 4–216 (CVLIVDAGLG…LQNFIALNPC (213 aa)) form the Glutamine amidotransferase type-1 domain. Residue C84 is the Nucleophile of the active site. Catalysis depends on residues H195 and E197.

In terms of assembly, heterodimer of HisH and HisF.

It is found in the cytoplasm. The enzyme catalyses 5-[(5-phospho-1-deoxy-D-ribulos-1-ylimino)methylamino]-1-(5-phospho-beta-D-ribosyl)imidazole-4-carboxamide + L-glutamine = D-erythro-1-(imidazol-4-yl)glycerol 3-phosphate + 5-amino-1-(5-phospho-beta-D-ribosyl)imidazole-4-carboxamide + L-glutamate + H(+). It carries out the reaction L-glutamine + H2O = L-glutamate + NH4(+). It functions in the pathway amino-acid biosynthesis; L-histidine biosynthesis; L-histidine from 5-phospho-alpha-D-ribose 1-diphosphate: step 5/9. Functionally, IGPS catalyzes the conversion of PRFAR and glutamine to IGP, AICAR and glutamate. The HisH subunit provides the glutamine amidotransferase activity that produces the ammonia necessary to HisF for the synthesis of IGP and AICAR. The chain is Imidazole glycerol phosphate synthase subunit HisH 1 (hisH1) from Prochlorococcus marinus (strain MIT 9313).